The chain runs to 344 residues: KRR1 small subunit processome component homolog (344 aa).

Residues 125-193 (DIIKIGNLVH…VRDIVLETMN (69 aa)) enclose the KH domain. Residues 232 to 245 (NISKRKQPKVKKQK) are compositionally biased toward basic residues. Disordered regions lie at residues 232–260 (NISK…ESKV) and 273–326 (QEQK…TKVD). A coiled-coil region spans residues 270–295 (FLNQEQKQAKRNQGRTEKQKEAAKRQ). 2 stretches are compositionally biased toward basic and acidic residues: residues 283–302 (GRTE…RNKD) and 315–326 (RKKEDGSSTKVD).

It belongs to the KRR1 family. As to quaternary structure, monomer. Component of the ribosomal small subunit (SSU) processome.

It localises to the nucleus. It is found in the nucleolus. Required for 40S ribosome biogenesis. Involved in nucleolar processing of pre-18S ribosomal RNA and ribosome assembly. Binds to RNA. Required for female germline development, cell viability during eye development and for survival of dividing cells and epithelial cells during early wing disk development. The sequence is that of KRR1 small subunit processome component homolog from Drosophila yakuba (Fruit fly).